The sequence spans 133 residues: Holo-[acyl-carrier-protein] synthase (133 aa).

Positions 8 and 56 each coordinate Mg(2+).

Belongs to the P-Pant transferase superfamily. AcpS family. It depends on Mg(2+) as a cofactor.

Its subcellular location is the cytoplasm. It catalyses the reaction apo-[ACP] + CoA = holo-[ACP] + adenosine 3',5'-bisphosphate + H(+). Functionally, transfers the 4'-phosphopantetheine moiety from coenzyme A to a Ser of acyl-carrier-protein. The chain is Holo-[acyl-carrier-protein] synthase from Clostridium perfringens (strain ATCC 13124 / DSM 756 / JCM 1290 / NCIMB 6125 / NCTC 8237 / Type A).